The sequence spans 89 residues: MARVTVEDAVDRVGNRFDLILLASRRARQLANGKEPLVETKNEKPTVIALREIEQGLIDNERLDIEDQAAQKQQDAEELRAVDALRGIE.

The protein belongs to the RNA polymerase subunit omega family. In terms of assembly, the RNAP catalytic core consists of 2 alpha, 1 beta, 1 beta' and 1 omega subunit. When a sigma factor is associated with the core the holoenzyme is formed, which can initiate transcription.

The catalysed reaction is RNA(n) + a ribonucleoside 5'-triphosphate = RNA(n+1) + diphosphate. Promotes RNA polymerase assembly. Latches the N- and C-terminal regions of the beta' subunit thereby facilitating its interaction with the beta and alpha subunits. The polypeptide is DNA-directed RNA polymerase subunit omega (Idiomarina loihiensis (strain ATCC BAA-735 / DSM 15497 / L2-TR)).